We begin with the raw amino-acid sequence, 864 residues long: Alpha-glucosidase (864 aa).

An N-terminal signal peptide occupies residues 1–22 (MAKVSFIFVAIALITGNVLCQT). N-linked (GlcNAc...) asparagine glycosylation is found at N187, N364, and N406. D430 acts as the Nucleophile in catalysis. The active site involves E433. 2 N-linked (GlcNAc...) asparagine glycosylation sites follow: N466 and N500. The active-site Proton donor is D567. Residues N568 and N734 are each glycosylated (N-linked (GlcNAc...) asparagine).

The protein belongs to the glycosyl hydrolase 31 family.

It carries out the reaction Hydrolysis of terminal, non-reducing (1-&gt;4)-linked alpha-D-glucose residues with release of alpha-D-glucose.. Its function is as follows. Hydrolyzes not only malto-oligosaccharides but also soluble starch. This is Alpha-glucosidase from Mucor javanicus.